Here is a 391-residue protein sequence, read N- to C-terminus: Dual-specificity RNA methyltransferase RlmN (391 aa).

The disordered stretch occupies residues 1-20; it reads MTSVVADSLTETKTDSQKPI. Residues 10–20 show a composition bias toward basic and acidic residues; sequence TETKTDSQKPI. Glu-120 acts as the Proton acceptor in catalysis. The 241-residue stretch at 126 to 366 folds into the Radical SAM core domain; it reads DADRGTLCIS…APVRRTRGQD (241 aa). A disulfide bridge links Cys-133 with Cys-371. Positions 140, 144, and 147 each coordinate [4Fe-4S] cluster. Residues 195–196, Ser-227, 249–251, and Asn-328 contribute to the S-adenosyl-L-methionine site; these read GE and SLH. Cys-371 functions as the S-methylcysteine intermediate in the catalytic mechanism.

This sequence belongs to the radical SAM superfamily. RlmN family. [4Fe-4S] cluster is required as a cofactor.

The protein resides in the cytoplasm. It catalyses the reaction adenosine(2503) in 23S rRNA + 2 reduced [2Fe-2S]-[ferredoxin] + 2 S-adenosyl-L-methionine = 2-methyladenosine(2503) in 23S rRNA + 5'-deoxyadenosine + L-methionine + 2 oxidized [2Fe-2S]-[ferredoxin] + S-adenosyl-L-homocysteine. The enzyme catalyses adenosine(37) in tRNA + 2 reduced [2Fe-2S]-[ferredoxin] + 2 S-adenosyl-L-methionine = 2-methyladenosine(37) in tRNA + 5'-deoxyadenosine + L-methionine + 2 oxidized [2Fe-2S]-[ferredoxin] + S-adenosyl-L-homocysteine. In terms of biological role, specifically methylates position 2 of adenine 2503 in 23S rRNA and position 2 of adenine 37 in tRNAs. m2A2503 modification seems to play a crucial role in the proofreading step occurring at the peptidyl transferase center and thus would serve to optimize ribosomal fidelity. The sequence is that of Dual-specificity RNA methyltransferase RlmN from Zymomonas mobilis subsp. mobilis (strain ATCC 31821 / ZM4 / CP4).